The primary structure comprises 395 residues: GPI-anchor transamidase (395 aa).

The first 27 residues, 1 to 27 (MVDTCFLSRGLTTLAGLLLLPFGSLAA), serve as a signal peptide directing secretion. At 28–368 (SQIEDQAEQF…PKLKDWHPPG (341 aa)) the chain is on the lumenal side. Ca(2+) is bound by residues Asp79, Ile82, Glu118, and Asp120. His164 (proton donor) is an active-site residue. Cys206 (nucleophile; acyl-thioester intermediate) is an active-site residue. A protein contacts are provided by Cys206, Ser232, and Ser234. Residues 231–236 (DSLSHQ) form an autoinhibitory loop region. Cys275 and Cys280 are joined by a disulfide. Residues 369–385 (GFILGLWALIIMVFFKT) form a helical membrane-spanning segment. Topologically, residues 386-395 (YGIKHMKFIF) are cytoplasmic.

Belongs to the peptidase C13 family. In terms of assembly, heteropentamer. Part of the GPI-anchor transamidase complex, consisting of PIGK, PIGT, PIGS, PIGU and GAA1. Interacts with GPAA1. Interacts with PIGT; this interaction, via a disulfide link, stabilizes the expression of GAA1 and PIGK and links them to PIGS. The disulfide bond between PIGK/GPI8 and PIGT is important for normal enzyme activity.

It is found in the endoplasmic reticulum membrane. It participates in glycolipid biosynthesis; glycosylphosphatidylinositol-anchor biosynthesis. With respect to regulation, in the absence of proproteins substrates, exists in an inactive state with a disrupted catalytic site by an autoinhibitory loop. The binding of proprotein substrates, particularly the CSP region, to GPI-T triggers concerted conformational changes that alleviate the inhibition by the autoinhibitory loop. Meanwhile, proprotein residues near the omega- site induce the formation of a catalytic cleft for catalysis, following which the products are released and GPI-T reverts to the inactive state. Catalytic subunit of the glycosylphosphatidylinositol-anchor (GPI-anchor) transamidase (GPI-T) complex that catalyzes the formation of the linkage between a proprotein and a GPI-anchor and participates in GPI anchored protein biosynthesis. Recognizes diverse proproteins at a C-terminal signal peptide (CSP) region that lacks consensus sequence and replaces it with a GPI-anchor via a transamidation reaction. Transamidation catalysis reaction follows a two-phase mechanism. In the acyl-enzyme phase, the carbonyl group of the proproteins's omega-site undergoes a nucleophilic attack forming an enzyme-substrate thioester bond. Followed by a general acid catalysis that allows CSP releasing, regenerating the carbonyl, and forming the acyl-enzyme intermediate. In the GPI-anchor attachment phase, the amino group of the GPI-anchor's ethanolamine phosphate, the one on third mannose (EtNP3), mediates a nucleophilic attack on the carbonyl of the acyl-enzyme intermediate, replacing the CSP, allowing GPI-anchor attachment to the omega-residue, therefore forming the product and freeing the enzyme. The sequence is that of GPI-anchor transamidase from Bos taurus (Bovine).